The following is a 356-amino-acid chain: Heat-inducible transcription repressor HrcA (356 aa).

Belongs to the HrcA family.

In terms of biological role, negative regulator of class I heat shock genes (grpE-dnaK-dnaJ and groELS operons). Prevents heat-shock induction of these operons. The sequence is that of Heat-inducible transcription repressor HrcA from Chlorobaculum tepidum (strain ATCC 49652 / DSM 12025 / NBRC 103806 / TLS) (Chlorobium tepidum).